The primary structure comprises 152 residues: Acidic phospholipase A2 S17-58 (152 aa).

The N-terminal stretch at 1–19 (MYPAHLLVLLAVCVSLLGA) is a signal peptide. A propeptide spanning residues 20–27 (SNIPLPSL) is cleaved from the precursor. 7 cysteine pairs are disulfide-bonded: Cys-38–Cys-104, Cys-54–Cys-151, Cys-56–Cys-72, Cys-71–Cys-132, Cys-78–Cys-125, Cys-88–Cys-118, and Cys-111–Cys-123. Ca(2+) contacts are provided by Tyr-55, Gly-57, and Gly-59. The active site involves His-75. Position 76 (Asp-76) interacts with Ca(2+). The active site involves Asp-126.

Belongs to the phospholipase A2 family. Group I subfamily. D49 sub-subfamily. Requires Ca(2+) as cofactor. In terms of tissue distribution, expressed by the venom gland.

The protein localises to the secreted. It catalyses the reaction a 1,2-diacyl-sn-glycero-3-phosphocholine + H2O = a 1-acyl-sn-glycero-3-phosphocholine + a fatty acid + H(+). Snake venom phospholipase A2 (PLA2) that inhibits collagen-induced platelet aggregation. PLA2 catalyzes the calcium-dependent hydrolysis of the 2-acyl groups in 3-sn-phosphoglycerides. The polypeptide is Acidic phospholipase A2 S17-58 (Austrelaps superbus (Lowland copperhead snake)).